The following is a 296-amino-acid chain: Small ribosomal subunit biogenesis GTPase RsgA (296 aa).

One can recognise a CP-type G domain in the interval 63–224 (RNQLVRPPVA…IADTPGFSSY (162 aa)). Residues 112–115 (SKTD) and 167–175 (GQTGAGKST) each bind GTP. Residues C248, C253, H255, and C261 each contribute to the Zn(2+) site.

Belongs to the TRAFAC class YlqF/YawG GTPase family. RsgA subfamily. In terms of assembly, monomer. Associates with 30S ribosomal subunit, binds 16S rRNA. It depends on Zn(2+) as a cofactor.

It localises to the cytoplasm. One of several proteins that assist in the late maturation steps of the functional core of the 30S ribosomal subunit. Helps release RbfA from mature subunits. May play a role in the assembly of ribosomal proteins into the subunit. Circularly permuted GTPase that catalyzes slow GTP hydrolysis, GTPase activity is stimulated by the 30S ribosomal subunit. In Limosilactobacillus reuteri (strain DSM 20016) (Lactobacillus reuteri), this protein is Small ribosomal subunit biogenesis GTPase RsgA.